Reading from the N-terminus, the 218-residue chain is NAD(P)H-quinone oxidoreductase subunit U, chloroplastic (218 aa).

The transit peptide at 1 to 53 directs the protein to the chloroplast; that stretch reads MASLSTITQPSLVHIPGESVLHHVPSTCSFPWKPTINTKRIICSPARNSSEVS. Residues 47-72 are disordered; that stretch reads RNSSEVSAEAETEGGSSTAVDEAPKE. Residues 95-159 enclose the J domain; that stretch reads DHYGRLGIFR…EERRMYDWSL (65 aa). The helical transmembrane segment at 197–217 threads the bilayer; it reads ILGYFIGAWLVLGVALSVAFN.

In terms of assembly, part of the chloroplast NDH complex, composed of a mixture of chloroplast and nucleus encoded subunits. Component of the electron donor-binding subcomplex, at least composed of NDHS, NDHT and NDHU.

The protein localises to the plastid. It localises to the chloroplast thylakoid membrane. The enzyme catalyses a plastoquinone + NADH + (n+1) H(+)(in) = a plastoquinol + NAD(+) + n H(+)(out). It catalyses the reaction a plastoquinone + NADPH + (n+1) H(+)(in) = a plastoquinol + NADP(+) + n H(+)(out). Functionally, NDH shuttles electrons from NAD(P)H:plastoquinone, via FMN and iron-sulfur (Fe-S) centers, to quinones in the photosynthetic chain and possibly in a chloroplast respiratory chain. The immediate electron acceptor for the enzyme in this species is believed to be plastoquinone. Couples the redox reaction to proton translocation, and thus conserves the redox energy in a proton gradient. This Arabidopsis thaliana (Mouse-ear cress) protein is NAD(P)H-quinone oxidoreductase subunit U, chloroplastic.